Consider the following 272-residue polypeptide: Alcohol dehydrogenase-related 31 kDa protein (272 aa).

Residue 11-34 (YVADCGGIALETSKVLMTKNIAKL) participates in NAD(+) binding. Serine 139 serves as a coordination point for substrate. Tyrosine 152 acts as the Proton acceptor in catalysis.

The protein belongs to the short-chain dehydrogenases/reductases (SDR) family.

In Drosophila melanogaster (Fruit fly), this protein is Alcohol dehydrogenase-related 31 kDa protein (Adhr).